The sequence spans 147 residues: UPF0260 protein CJA_2436 (147 aa).

This sequence belongs to the UPF0260 family.

The polypeptide is UPF0260 protein CJA_2436 (Cellvibrio japonicus (strain Ueda107) (Pseudomonas fluorescens subsp. cellulosa)).